Reading from the N-terminus, the 152-residue chain is Large ribosomal subunit protein bL9 (152 aa).

It belongs to the bacterial ribosomal protein bL9 family.

In terms of biological role, binds to the 23S rRNA. The sequence is that of Large ribosomal subunit protein bL9 from Coxiella burnetii (strain Dugway 5J108-111).